The chain runs to 132 residues: uncharacterized protein (132 aa).

The interval 39-93 (HPAGASEALGALPPPRQLVEKRRVSPPRRLDQSGRDGGAVAKCSLSRGLSPPGWT) is disordered. Residues 56-72 (LVEKRRVSPPRRLDQSG) show a composition bias toward basic and acidic residues.

This is an uncharacterized protein from Homo sapiens (Human).